The following is a 462-amino-acid chain: tRNA modification GTPase MnmE (462 aa).

3 residues coordinate (6S)-5-formyl-5,6,7,8-tetrahydrofolate: R27, E89, and R128. Positions 223-383 constitute a TrmE-type G domain; sequence GLKIAIVGRP…LEAAILAAVG (161 aa). GTP contacts are provided by residues 233 to 238, 252 to 258, and 277 to 280; these read NVGKSS, TDLPGRT, and DTAG. 2 residues coordinate Mg(2+): S237 and T258. K462 contacts (6S)-5-formyl-5,6,7,8-tetrahydrofolate.

Belongs to the TRAFAC class TrmE-Era-EngA-EngB-Septin-like GTPase superfamily. TrmE GTPase family. Homodimer. Heterotetramer of two MnmE and two MnmG subunits. It depends on K(+) as a cofactor.

The protein localises to the cytoplasm. Functionally, exhibits a very high intrinsic GTPase hydrolysis rate. Involved in the addition of a carboxymethylaminomethyl (cmnm) group at the wobble position (U34) of certain tRNAs, forming tRNA-cmnm(5)s(2)U34. This Synechococcus sp. (strain ATCC 27144 / PCC 6301 / SAUG 1402/1) (Anacystis nidulans) protein is tRNA modification GTPase MnmE.